The chain runs to 662 residues: Intracellular exo-alpha-(1-&gt;5)-L-arabinofuranosidase (662 aa).

Alpha-L-arabinofuranose contacts are provided by E27, N72, and N174. E175 serves as the catalytic Proton donor/acceptor. Positions 246, 294, and 352 each coordinate alpha-L-arabinofuranose. Catalysis depends on E294, which acts as the Nucleophile. Disordered stretches follow at residues 454-483 (LADA…SLRD), 497-548 (SIRC…RTAR), and 588-662 (WTRW…ARRC). The segment covering 519 to 533 (TGTPPAAPPSSSSAP) has biased composition (low complexity). A compositionally biased stretch (basic and acidic residues) spans 537–547 (PTARRSPDRTA). 3 stretches are compositionally biased toward low complexity: residues 590 to 603 (RWAP…PSRR), 628 to 641 (RRSP…TPAP), and 649 to 662 (AGAS…ARRC).

The protein belongs to the glycosyl hydrolase 51 family. As to quaternary structure, homohexamer; trimer of dimers.

The protein localises to the cytoplasm. The enzyme catalyses Hydrolysis of terminal non-reducing alpha-L-arabinofuranoside residues in alpha-L-arabinosides.. It participates in glycan metabolism; L-arabinan degradation. In terms of biological role, involved in the degradation of arabinan and is a key enzyme in the complete degradation of the plant cell wall. Catalyzes the cleavage of terminal alpha-(1-&gt;5)-arabinofuranosyl bonds in different hemicellulosic homopolysaccharides (arabino-oligoxylosides, branched and debranched arabinans). It acts rapidly on the short-chain arabino-oligoxylosides from digestion of xylan with xylanases. It hydrolyzes slowly arabinan and arabinoxylan from wheat and rye flour. This Streptomyces lividans protein is Intracellular exo-alpha-(1-&gt;5)-L-arabinofuranosidase.